Reading from the N-terminus, the 475-residue chain is F-box protein SKIP22 (475 aa).

The disordered stretch occupies residues Asp114–Gly133. Residues Pro319–Lys365 enclose the F-box domain.

Part of a SCF (ASK-cullin-F-box) protein ligase complex. Interacts with SKP1A/ASK1 and SPK1B/ASK2.

The protein localises to the nucleus. The protein operates within protein modification; protein ubiquitination. Its function is as follows. Component of SCF(ASK-cullin-F-box) E3 ubiquitin ligase complexes, which may mediate the ubiquitination and subsequent proteasomal degradation of target proteins. The protein is F-box protein SKIP22 (SKIP22) of Arabidopsis thaliana (Mouse-ear cress).